We begin with the raw amino-acid sequence, 333 residues long: Anthranilate phosphoribosyltransferase (333 aa).

5-phospho-alpha-D-ribose 1-diphosphate-binding positions include G81, 84–85 (GD), T89, 91–94 (NIST), 109–117 (KHGNRSVSS), and A121. Position 81 (G81) interacts with anthranilate. A Mg(2+)-binding site is contributed by S93. Position 112 (N112) interacts with anthranilate. Position 167 (R167) interacts with anthranilate. D225 and E226 together coordinate Mg(2+).

This sequence belongs to the anthranilate phosphoribosyltransferase family. Homodimer. Mg(2+) is required as a cofactor.

The enzyme catalyses N-(5-phospho-beta-D-ribosyl)anthranilate + diphosphate = 5-phospho-alpha-D-ribose 1-diphosphate + anthranilate. It functions in the pathway amino-acid biosynthesis; L-tryptophan biosynthesis; L-tryptophan from chorismate: step 2/5. Catalyzes the transfer of the phosphoribosyl group of 5-phosphorylribose-1-pyrophosphate (PRPP) to anthranilate to yield N-(5'-phosphoribosyl)-anthranilate (PRA). This Haemophilus influenzae (strain 86-028NP) protein is Anthranilate phosphoribosyltransferase.